The primary structure comprises 404 residues: Probable tRNA sulfurtransferase (404 aa).

Positions 61 to 166 (QTLVTGLPKI…HDATYMMAQV (106 aa)) constitute a THUMP domain. ATP is bound by residues 184-185 (ML), 209-210 (HF), Arg-266, Gly-288, and Gln-297.

Belongs to the ThiI family.

Its subcellular location is the cytoplasm. It carries out the reaction [ThiI sulfur-carrier protein]-S-sulfanyl-L-cysteine + a uridine in tRNA + 2 reduced [2Fe-2S]-[ferredoxin] + ATP + H(+) = [ThiI sulfur-carrier protein]-L-cysteine + a 4-thiouridine in tRNA + 2 oxidized [2Fe-2S]-[ferredoxin] + AMP + diphosphate. The catalysed reaction is [ThiS sulfur-carrier protein]-C-terminal Gly-Gly-AMP + S-sulfanyl-L-cysteinyl-[cysteine desulfurase] + AH2 = [ThiS sulfur-carrier protein]-C-terminal-Gly-aminoethanethioate + L-cysteinyl-[cysteine desulfurase] + A + AMP + 2 H(+). It participates in cofactor biosynthesis; thiamine diphosphate biosynthesis. In terms of biological role, catalyzes the ATP-dependent transfer of a sulfur to tRNA to produce 4-thiouridine in position 8 of tRNAs, which functions as a near-UV photosensor. Also catalyzes the transfer of sulfur to the sulfur carrier protein ThiS, forming ThiS-thiocarboxylate. This is a step in the synthesis of thiazole, in the thiamine biosynthesis pathway. The sulfur is donated as persulfide by IscS. The chain is Probable tRNA sulfurtransferase from Lysinibacillus sphaericus (strain C3-41).